Consider the following 122-residue polypeptide: MICOS complex subunit MIC13 homolog QIL1 (122 aa).

Residues Gly-9–Trp-25 traverse the membrane as a helical segment.

Belongs to the MICOS complex subunit Mic13 family. Component of the mitochondrial contact site and cristae organizing system (MICOS) complex.

The protein resides in the mitochondrion inner membrane. In terms of biological role, component of the MICOS complex, a large protein complex of the mitochondrial inner membrane that plays crucial roles in the maintenance of crista junctions, inner membrane architecture, and formation of contact sites to the outer membrane. This is MICOS complex subunit MIC13 homolog QIL1 from Drosophila melanogaster (Fruit fly).